A 479-amino-acid chain; its full sequence is Anaerobic nitric oxide reductase flavorubredoxin (479 aa).

The segment at 30 to 210 is zinc metallo-hydrolase; the sequence is LRGSSYNSYL…PFSRLVTPKI (181 aa). Residues His79, Glu81, Asp83, His147, Asp166, and His227 each contribute to the Fe cation site. The region spanning 254-393 is the Flavodoxin-like domain; the sequence is ITIFYDTMSN…LCREHGREIA (140 aa). Residues 260-264 and 342-369 each bind FMN; these read TMSNN and AFGS…EMSL. Residues 423-474 enclose the Rubredoxin-like domain; sequence GPRMQCSVCQWIYDPAKGEPMQDVAPGTPWSEVPDNFLCPECSLGKDVFEEL. 4 residues coordinate Fe cation: Cys428, Cys431, Cys461, and Cys464.

This sequence in the N-terminal section; belongs to the zinc metallo-hydrolase group 3 family. As to quaternary structure, homotetramer. It depends on Fe cation as a cofactor. Requires FMN as cofactor.

Its subcellular location is the cytoplasm. It participates in nitrogen metabolism; nitric oxide reduction. Anaerobic nitric oxide reductase; uses NADH to detoxify nitric oxide (NO), protecting several 4Fe-4S NO-sensitive enzymes. Has at least 2 reductase partners, only one of which (NorW, flavorubredoxin reductase) has been identified. NO probably binds to the di-iron center; electrons enter from the NorW at rubredoxin and are transferred sequentially to the FMN center and the di-iron center. Also able to function as an aerobic oxygen reductase. This is Anaerobic nitric oxide reductase flavorubredoxin from Shigella boydii serotype 4 (strain Sb227).